The sequence spans 112 residues: Small ribosomal subunit protein bS16 (112 aa).

The protein belongs to the bacterial ribosomal protein bS16 family.

This Karelsulcia muelleri (strain GWSS) (Sulcia muelleri) protein is Small ribosomal subunit protein bS16.